Consider the following 319-residue polypeptide: Mitochondrial thiamine pyrophosphate carrier 1 (319 aa).

3 Solcar repeats span residues 12 to 110 (GQRY…VTQS), 121 to 207 (PQPA…VRVP), and 214 to 309 (PFGS…VLKI). 6 helical membrane-spanning segments follow: residues 17 to 35 (VVAA…VAPL), 91 to 107 (LLYI…YRTV), 127 to 147 (FVSG…FDLL), 182 to 201 (GVSA…FATY), 221 to 237 (TAGV…VFPL), and 284 to 301 (GLTV…VTMW).

This sequence belongs to the mitochondrial carrier (TC 2.A.29) family.

The protein resides in the mitochondrion inner membrane. In terms of biological role, mitochondrial transporter that mediates uptake of thiamine pyrophosphate (ThPP) into mitochondria. The polypeptide is Mitochondrial thiamine pyrophosphate carrier 1 (TPC1) (Coccidioides immitis (strain RS) (Valley fever fungus)).